We begin with the raw amino-acid sequence, 345 residues long: NADPH dehydrogenase (345 aa).

Position 23-26 (23-26) interacts with FMN; that stretch reads SPMC. Y28 contacts substrate. FMN contacts are provided by A60 and Q102. Position 164 to 167 (164 to 167) interacts with substrate; that stretch reads HGAH. Residues R215 and 307–308 contribute to the FMN site; that span reads GR.

The protein belongs to the NADH:flavin oxidoreductase/NADH oxidase family. NamA subfamily. Homotetramer. FMN is required as a cofactor.

The enzyme catalyses A + NADPH + H(+) = AH2 + NADP(+). Functionally, catalyzes the reduction of the double bond of an array of alpha,beta-unsaturated aldehydes and ketones. It also reduces the nitro group of nitroester and nitroaromatic compounds. It could have a role in detoxification processes. The chain is NADPH dehydrogenase from Bacillus thuringiensis (strain Al Hakam).